The sequence spans 461 residues: Probable tubulin polyglutamylase TTLL9 (461 aa).

The span at 1–10 shows a compositional bias: polar residues; it reads MSRQKNQNSK. A disordered region spans residues 1–20; the sequence is MSRQKNQNSKGHGVSKGKER. A TTL domain is found at 22–402; sequence QRTLIRFKTT…EARLTGKEKR (381 aa). ATP-binding positions include K149 and 155–156; that span reads QG. Q155 provides a ligand contact to a protein. Residues 172–208 form a disordered region; that stretch reads RKGTSGKKPTGVETQPARANMNPSGSHDTRSSDDQKD. Positions 198–208 are enriched in basic and acidic residues; that stretch reads HDTRSSDDQKD. ATP-binding positions include 218 to 221 and 231 to 233; these read QRYV and KFD. An L-glutamate-binding site is contributed by R257. 276 to 277 provides a ligand contact to ATP; the sequence is TN. K294 contributes to the L-glutamate binding site. Mg(2+) contacts are provided by D348, E361, and N363. K379 contributes to the L-glutamate binding site.

This sequence belongs to the tubulin--tyrosine ligase family. Mg(2+) serves as cofactor. In terms of tissue distribution, highly expressed in brain and testis. Expressed in heart, kidney and lung. In the brain, expressed in ependymal cilia, cortex, corpus callosum and striatum. In the testis, specifically expressed in the seminiferous tubules.

The protein localises to the cytoplasm. The protein resides in the cytoskeleton. Its subcellular location is the cilium basal body. It is found in the flagellum axoneme. The enzyme catalyses (L-glutamyl)(n)-gamma-L-glutamyl-L-glutamyl-[protein] + L-glutamate + ATP = (L-glutamyl)(n+1)-gamma-L-glutamyl-L-glutamyl-[protein] + ADP + phosphate + H(+). Probable tubulin polyglutamylase that generates side chains of glutamate on the gamma-carboxyl group of specific glutamate residues within the C-terminal tail of target proteins. Similar to TTLL1, may acquire enzymatic activity only in complex with other proteins as it is most likely lacking domains important for autonomous activity. Mediates tubulin polyglutamylation which induces establishment of microtubule heterogeneity in sperm flagella, thereby playing a role in normal motile flagella axoneme structure and sperm flagella beating pattern. This is Probable tubulin polyglutamylase TTLL9 from Mus musculus (Mouse).